A 373-amino-acid polypeptide reads, in one-letter code: MVVGVHRPTQLVIDRQALHDNIQAEVTRLASGCELFMVVKANGYGHGAVQVAQVAKEAGATGFCVAILDEALELRAAGFNEPILVLGVTEPEDAPLMAQQHISATVAATDWLVAADAYLALAQPTAPLQVHLGLDTGMGRIGFKTTTELTTAVSYLATHATLNFEGIFTHFATADSPDETYFKQQVAKWQTLTAALKERPRYVHVSNSATSLWHAACNDNMVRFGVAGYGLNPSGTAIPAPYALKPALSLTSQLVHSKQVVAGESVGYGATYTAQQTEWVGTVPIGYADGYERRLQGFHVLVDGQACEIIGRVCMDQLMIRLPHDYARGTRVTLIGRDGDHVITLQEMADYCQTIHYELACGFTSRLPRVYRH.

Lysine 40 functions as the Proton acceptor; specific for D-alanine in the catalytic mechanism. N6-(pyridoxal phosphate)lysine is present on lysine 40. Arginine 140 contacts substrate. Tyrosine 268 (proton acceptor; specific for L-alanine) is an active-site residue. Methionine 315 provides a ligand contact to substrate.

The protein belongs to the alanine racemase family. The cofactor is pyridoxal 5'-phosphate.

The enzyme catalyses L-alanine = D-alanine. It functions in the pathway amino-acid biosynthesis; D-alanine biosynthesis; D-alanine from L-alanine: step 1/1. Functionally, catalyzes the interconversion of L-alanine and D-alanine. May also act on other amino acids. The chain is Alanine racemase (alr) from Levilactobacillus brevis (strain ATCC 367 / BCRC 12310 / CIP 105137 / JCM 1170 / LMG 11437 / NCIMB 947 / NCTC 947) (Lactobacillus brevis).